A 724-amino-acid polypeptide reads, in one-letter code: Threonine--tRNA ligase 2, cytoplasmic (724 aa).

An N-acetylalanine modification is found at A2. Residues 44 to 72 (QAEGPCLTREVAQLRAENRELRHCLYRLR) adopt a coiled-coil conformation. Residues 90–112 (RAEAGRAAAGAQPPPSQSLEEDV) form a disordered region. The 66-residue stretch at 155–220 (DSSNVITVRV…EGDATVELLT (66 aa)) folds into the TGS domain. S451 is modified (phosphoserine).

It belongs to the class-II aminoacyl-tRNA synthetase family. May be a component of the multisynthetase complex (MSC), a large multi-subunit complex which contains at least eight different aminoacyl-tRNA synthetases plus three auxillary subunits AIMP1, AIMP2 and EEF1E1. Interacts with the MSC components EPRS1, AIMP1, AIMP2 and KARS1.

It is found in the cytoplasm. The protein localises to the nucleus. The enzyme catalyses tRNA(Thr) + L-threonine + ATP = L-threonyl-tRNA(Thr) + AMP + diphosphate + H(+). Its function is as follows. Catalyzes the attachment of threonine to tRNA(Thr) in a two-step reaction: threonine is first activated by ATP to form Thr-AMP and then transferred to the acceptor end of tRNA(Thr). Also edits incorrectly charged tRNA(Thr) via its editing domain, at the post-transfer stage. This chain is Threonine--tRNA ligase 2, cytoplasmic (TARS3), found in Bos taurus (Bovine).